The sequence spans 1331 residues: Beta-mannanase/endoglucanase A (1331 aa).

An N-terminal signal peptide occupies residues 1–41; that stretch reads MRLKTKIRKKWLSVLCTVVFLLNILFIANVTILPKVGAATS. The catalytic (mannanase) stretch occupies residues 42 to 325; sequence NDGVVKIDTS…YKTNAIGTSS (284 aa). Glutamate 162 acts as the Proton donor in catalysis. Glutamate 257 acts as the Nucleophile in catalysis. 3 disordered regions span residues 319 to 363, 515 to 566, and 717 to 780; these read NAIG…TPAT, PSGA…TPAT, and EPSG…PLPT. Low complexity predominate over residues 323 to 335; that stretch reads TSSTPTPTSTVTP. The 154-residue stretch at 363–516 folds into the CBM3 1 domain; it reads TSGQIKVLYA…GVLVWGQEPS (154 aa). Composition is skewed to pro residues over residues 521–541 and 551–561; these read APAPTATPTPTPTVTPTPTVT and TPTPTPTPTPV. Residues 566-719 form the CBM3 2 domain; the sequence is TGGQIKVLYA…GVLVWGQEPS (154 aa). Over residues 721–735 the composition is skewed to low complexity; sequence TTPSPTSTPTVTVTP. 2 stretches are compositionally biased toward pro residues: residues 736 to 756 and 766 to 780; these read TPTPTPTPTPTPTVTPTPTVT and TPTPTPIPTVTPLPT. A catalytic (endoglucanase) region spans residues 781 to 1331; that stretch reads ISPSPSVVEI…RNLVFMRALV (551 aa).

It in the N-terminal section; belongs to the glycosyl hydrolase 5 (cellulase A) family. In the C-terminal section; belongs to the glycosyl hydrolase 44 (cellulase J) family.

The catalysed reaction is Random hydrolysis of (1-&gt;4)-beta-D-mannosidic linkages in mannans, galactomannans and glucomannans.. The enzyme catalyses Endohydrolysis of (1-&gt;4)-beta-D-glucosidic linkages in cellulose, lichenin and cereal beta-D-glucans.. In terms of biological role, degradation of hemicelluloses, the second most abundant polysaccharides in nature. Contains two catalytic domains with mannanase and endoglucanase activities. The sequence is that of Beta-mannanase/endoglucanase A (manA) from Caldicellulosiruptor saccharolyticus (Caldocellum saccharolyticum).